The sequence spans 876 residues: Importin subunit beta-1 (876 aa).

N-acetylmethionine is present on M1. HEAT repeat units follow at residues 3–29 (LITI…ERAA), 32–62 (NLPT…LQIK), 85–120 (ANAR…ACAE), 129–160 (LIPQ…ICQD), and 170–201 (SNEI…LLNS). Phosphoserine is present on S12. An Importin N-terminal domain is found at 21-101 (AQKFLERAAV…KNYVLQTLGT (81 aa)). K211 is subject to N6-acetyllysine. HEAT repeat units lie at residues 212–247 (ESER…IMSL), 260–302 (LFAI…EAAE), 314–359 (YAKG…STCC), 363–392 (IVPH…AFGS), 399–438 (PNQL…ICEL), 449–485 (LAPL…YEAA), 500–537 (SSSF…EIVK), 544–592 (YPAV…QNVL), 597–639 (HQDA…VEVL), 644–680 (LKYM…LCRA), 686–724 (LPFC…ALAI), 729–777 (KKYL…QGLK), 785–828 (PDVM…LCTA), and 834–875 (LKLV…LKNQ). The tract at residues 286–462 (VCDEEMDLAI…LQCLIEGLSA (177 aa)) is essential for high affinity interaction with RPL23A. Positions 329–342 (TLTKQDENDDDDDW) are IAB-binding. The ran-GTP binding stretch occupies residues 334–419 (DENDDDDDWN…MPTLIELMKD (86 aa)). N6-acetyllysine is present on residues K835 and K867.

Belongs to the importin beta family. Importin beta-1 subfamily. Forms a complex with an importin alpha subunit. Interacts with XPO1. Forms a heterodimer with IPO7. The KPNB1/IPO7 heterodimer interacts with H1 histone. Interacts with SNUPN. Interacts with H2A, H2B, H3 and H4 histones. Component of an import snRNP complex composed of KPNB1, SNUPN, SMN1 and ZNF259. Component of a nuclear export receptor complex composed of KPNB1, Ran, SNUPN and XPO1. Interacts with SRY. Interacts with PRKCI/atypical protein kinase C iota. Interacts with KPNA2. Interacts with KPNA7. Interacts with SNAI1 (via zinc fingers) and SNAI2 (via zinc fingers). Interacts with SLC35G1 and STIM1. Interacts with DCAF8. Interacts with RAN. Interacts with NUMA1 (via C-terminus); this interaction is inhibited by RanGTP. Interacts with ZBED1/hDREF; required for nuclear import of ZBED1/hDREF. Interacts with SRP19. Interacts with RPL23A (via BIB domain), RPS7 and RPL5. In terms of processing, mono-ADP-ribosylated by PARP16.

It localises to the cytoplasm. The protein resides in the nucleus envelope. Its function is as follows. Functions in nuclear protein import, either in association with an adapter protein, like an importin-alpha subunit, which binds to nuclear localization signals (NLS) in cargo substrates, or by acting as autonomous nuclear transport receptor. Acting autonomously, serves itself as NLS receptor. Docking of the importin/substrate complex to the nuclear pore complex (NPC) is mediated by KPNB1 through binding to nucleoporin FxFG repeats and the complex is subsequently translocated through the pore by an energy requiring, Ran-dependent mechanism. At the nucleoplasmic side of the NPC, Ran binds to importin-beta and the three components separate and importin-alpha and -beta are re-exported from the nucleus to the cytoplasm where GTP hydrolysis releases Ran from importin. The directionality of nuclear import is thought to be conferred by an asymmetric distribution of the GTP- and GDP-bound forms of Ran between the cytoplasm and nucleus. Mediates autonomously the nuclear import of ribosomal proteins RPL23A, RPS7 and RPL5. In association with IPO7, mediates the nuclear import of H1 histone. In vitro, mediates nuclear import of H2A, H2B, H3 and H4 histones. Imports MRTFA, SNAI1 and PRKCI into the nucleus. The polypeptide is Importin subunit beta-1 (Kpnb1) (Mus musculus (Mouse)).